The primary structure comprises 450 residues: uncharacterized protein (450 aa).

K283 carries the N6-(pyridoxal phosphate)lysine modification.

It belongs to the class-III pyridoxal-phosphate-dependent aminotransferase family. Pyridoxal 5'-phosphate is required as a cofactor.

Functionally, essential for glycerol catabolism. This is an uncharacterized protein from Bacillus subtilis (strain 168).